The primary structure comprises 317 residues: Glucose-6-phosphate isomerase, cytosolic 2B (317 aa).

Glu108 functions as the Proton donor in the catalytic mechanism. Active-site residues include His139 and Lys264.

The protein belongs to the GPI family. In terms of assembly, homodimer.

The protein resides in the cytoplasm. The catalysed reaction is alpha-D-glucose 6-phosphate = beta-D-fructose 6-phosphate. It participates in carbohydrate degradation; glycolysis; D-glyceraldehyde 3-phosphate and glycerone phosphate from D-glucose: step 2/4. This is Glucose-6-phosphate isomerase, cytosolic 2B (PGIC2-B) from Clarkia lewisii (Farewell-to-spring).